Reading from the N-terminus, the 74-residue chain is uncharacterized protein (74 aa).

The chain crosses the membrane as a helical span at residues leucine 54–leucine 72.

The protein localises to the membrane. This is an uncharacterized protein from Saccharomyces cerevisiae (strain ATCC 204508 / S288c) (Baker's yeast).